Consider the following 209-residue polypeptide: MRDPIETVMNLVPMVVEQTNRGERAYDIFSRLLKERIIFVNGPVEDGMSMLVCAQLLFLEAENPKKEINMYINSPGGVVTSGMAIYDTMQFIRPPVSTLCMGQAASMGSLLLTAGATGHRYALPNARIMVHQPSGGFQGQASDIERHAQDIIKMKRRLNEIYVKHTGRDYDTIERTLDRDHFMTAQEALEFGLIDKVVEVRDVSADESK.

Residue Ser-106 is the Nucleophile of the active site. Residue His-131 is part of the active site.

Belongs to the peptidase S14 family. In terms of assembly, fourteen ClpP subunits assemble into 2 heptameric rings which stack back to back to give a disk-like structure with a central cavity, resembling the structure of eukaryotic proteasomes.

It localises to the cytoplasm. The catalysed reaction is Hydrolysis of proteins to small peptides in the presence of ATP and magnesium. alpha-casein is the usual test substrate. In the absence of ATP, only oligopeptides shorter than five residues are hydrolyzed (such as succinyl-Leu-Tyr-|-NHMec, and Leu-Tyr-Leu-|-Tyr-Trp, in which cleavage of the -Tyr-|-Leu- and -Tyr-|-Trp bonds also occurs).. Cleaves peptides in various proteins in a process that requires ATP hydrolysis. Has a chymotrypsin-like activity. Plays a major role in the degradation of misfolded proteins. In Brucella suis biovar 1 (strain 1330), this protein is ATP-dependent Clp protease proteolytic subunit.